The following is a 902-amino-acid chain: 3'-5' exonuclease DinG (902 aa).

An Exonuclease domain is found at 8 to 161; the sequence is VVDLETTGNQ…DEDATTTAKL (154 aa). A Helicase ATP-binding domain is found at 241–496; sequence KNVTQSLNLT…KAVDKLEQQR (256 aa). Residue 276–283 coordinates ATP; that stretch reads APLGSGKS. The DEAH box motif lies at 448–451; sequence DEAH. Residues 714–883 enclose the Helicase C-terminal domain; sequence YIVEYITVTQ…HFKQRKGNIK (170 aa).

It belongs to the helicase family. DinG subfamily. Type 2 sub-subfamily.

3'-5' exonuclease. The sequence is that of 3'-5' exonuclease DinG from Staphylococcus epidermidis (strain ATCC 35984 / DSM 28319 / BCRC 17069 / CCUG 31568 / BM 3577 / RP62A).